Reading from the N-terminus, the 95-residue chain is Co-chaperonin GroES (95 aa).

Belongs to the GroES chaperonin family. As to quaternary structure, heptamer of 7 subunits arranged in a ring. Interacts with the chaperonin GroEL.

It is found in the cytoplasm. Functionally, together with the chaperonin GroEL, plays an essential role in assisting protein folding. The GroEL-GroES system forms a nano-cage that allows encapsulation of the non-native substrate proteins and provides a physical environment optimized to promote and accelerate protein folding. GroES binds to the apical surface of the GroEL ring, thereby capping the opening of the GroEL channel. This chain is Co-chaperonin GroES, found in Geobacter sulfurreducens (strain ATCC 51573 / DSM 12127 / PCA).